A 320-amino-acid polypeptide reads, in one-letter code: MEGAPHGCPGADSAQAGRGASCQGCPNQKLCASGAGAAPDPAVEEIREKMKTVRHRILVLSGKGGVGKSTFSAHLAHGLAEDGDTQVALLDIDICGPSIPKIMGLEGEQVHQSGSGWSPVYVEDNLGVMSVGFLLSSPDDAVIWRGPKKNGMIKQFLRDVDWGDVDYLVIDTPPGTSDEHLSVVQYLAAAHIDGAVILTTPQEVALQDVRKEISFCHKVKLPIIGVVENMSGFICPKCKRESQIFPPTTGGAEAMCQALKIPLLGKVPLDPHIGKSCDKGQSFFVEAPDSPATAAYKSIIQRIREFCNSRQSHDENLISP.

Met-1 bears the N-acetylmethionine mark. [4Fe-4S] cluster is bound by residues Cys-8, Cys-22, Cys-25, and Cys-31. Position 62–69 (62–69 (GKGGVGKS)) interacts with ATP. [4Fe-4S] cluster contacts are provided by Cys-235 and Cys-238. A Phosphoserine modification is found at Ser-319.

The protein belongs to the Mrp/NBP35 ATP-binding proteins family. NUBP1/NBP35 subfamily. In terms of assembly, heterotetramer of 2 NUBP1 and 2 NUBP2 chains. Interacts with KIFC1. Interacts with the BBS/CCT complex subunit CCT1. It depends on [4Fe-4S] cluster as a cofactor.

The protein localises to the cytoplasm. Its subcellular location is the nucleus. The protein resides in the cell projection. It localises to the cytoskeleton. It is found in the cilium axoneme. The protein localises to the cilium basal body. Its subcellular location is the microtubule organizing center. The protein resides in the centrosome. It localises to the centriole. Its function is as follows. Component of the cytosolic iron-sulfur (Fe/S) protein assembly (CIA) machinery. Required for maturation of extramitochondrial Fe-S proteins. The NUBP1-NUBP2 heterotetramer forms a Fe-S scaffold complex, mediating the de novo assembly of an Fe-S cluster and its transfer to target apoproteins. Implicated in the regulation of centrosome duplication. Negatively regulates cilium formation and structure. This Rattus norvegicus (Rat) protein is Cytosolic Fe-S cluster assembly factor NUBP1.